We begin with the raw amino-acid sequence, 205 residues long: Holliday junction branch migration complex subunit RuvA (205 aa).

The segment at Met-1 to Arg-64 is domain I. The segment at Thr-65 to Val-143 is domain II. Positions Lys-144–Ala-154 are flexible linker. Positions Ala-154–Lys-205 are domain III.

It belongs to the RuvA family. As to quaternary structure, homotetramer. Forms an RuvA(8)-RuvB(12)-Holliday junction (HJ) complex. HJ DNA is sandwiched between 2 RuvA tetramers; dsDNA enters through RuvA and exits via RuvB. An RuvB hexamer assembles on each DNA strand where it exits the tetramer. Each RuvB hexamer is contacted by two RuvA subunits (via domain III) on 2 adjacent RuvB subunits; this complex drives branch migration. In the full resolvosome a probable DNA-RuvA(4)-RuvB(12)-RuvC(2) complex forms which resolves the HJ.

It localises to the cytoplasm. Its function is as follows. The RuvA-RuvB-RuvC complex processes Holliday junction (HJ) DNA during genetic recombination and DNA repair, while the RuvA-RuvB complex plays an important role in the rescue of blocked DNA replication forks via replication fork reversal (RFR). RuvA specifically binds to HJ cruciform DNA, conferring on it an open structure. The RuvB hexamer acts as an ATP-dependent pump, pulling dsDNA into and through the RuvAB complex. HJ branch migration allows RuvC to scan DNA until it finds its consensus sequence, where it cleaves and resolves the cruciform DNA. The protein is Holliday junction branch migration complex subunit RuvA of Rhodopseudomonas palustris (strain TIE-1).